The following is a 271-amino-acid chain: Gasdermin bGSDM (271 aa).

A lipid anchor (S-palmitoyl cysteine) is attached at cysteine 7. Transmembrane regions (beta stranded) follow at residues 74–90 (IAGT…GLSV), 102–120 (TLGV…FEFS), 168–185 (RINV…GLNL), and 194–210 (ANVK…TVSF).

It belongs to the bacterial gasdermin family. As to quaternary structure, monomer. Forms large, homooligomeric ring-shaped pores when inserted in membranes. In terms of processing, palmitoylation helps stabilize the inactive state; may self palmitoylate. Palmitoylation plays a significant role in pore formation.

It is found in the cytoplasm. The protein resides in the cell inner membrane. The full-length protein before cleavage is inactive: intramolecular interactions between the N-terminal domain and the C-terminal region as well as the lipid modification, mediate autoinhibition. The pyroptosis-like-inducing activity is carried by the released N-terminal domain (Gasdermin bGSDM, N-terminus). In terms of biological role, involved in defense against bacteriophages. When this probable 4 gene operon (bGSDM-FE772_23060-FE772_23065-FE772_23070) is inserted into E.coli it provides nearly 100-fold protection against phages T5 and T6 and about 8-fold against phage T4. The operon without bGSDM no longer protects against phage. Cleavage of this precursor by its dedicated protease(s) releases the active moiety (gasdermin bGSDM, N-terminus) which inserts into membranes, forming pores and triggering cell death. Pore-forming protein that causes membrane permeabilization via a pyroptosis-like activity. Makes ring-like pores when released. This Lysobacter enzymogenes protein is Gasdermin bGSDM.